The following is a 150-amino-acid chain: MSKRKTKEPKVETVTLGPSVREGEQVFGVVHIFASFNDTFIHVTDLSGRETLVRITGGMKVKADRDESSPYAAMLAAQDVAQRCKELGITAMHVKLRATGGNKTKTPGPGAQSALRALARSGMKIGRIEDVTPIPTDSTRRKGGRRGRRL.

Ser19 carries the phosphoserine modification.

This sequence belongs to the universal ribosomal protein uS11 family.

The protein localises to the cytoplasm. This is Small ribosomal subunit protein uS11y (RPS14B) from Arabidopsis thaliana (Mouse-ear cress).